Here is a 176-residue protein sequence, read N- to C-terminus: MGAPATRRCVEWLLGLYFLSHIPITLFMDLQAVLPRELYPVEFRNLLKWYAKEFKDPLLQEPPAWFKSFLFCELVFQLPFFPIATYAFLKGSCKWIRTPAIIYSVHTMTTLIPILSTFLFEDFSKASGFKGQRPETLHERLTLVSVYAPYLLIPFILLIFMLRSPYYKYEEKRKKK.

At 1 to 9 the chain is on the cytoplasmic side; sequence MGAPATRRC. The helical transmembrane segment at 10 to 30 threads the bilayer; it reads VEWLLGLYFLSHIPITLFMDL. The EXPERA domain maps to 10 to 158; it reads VEWLLGLYFL…PYLLIPFILL (149 aa). Residues 31–68 lie on the Lumenal side of the membrane; sequence QAVLPRELYPVEFRNLLKWYAKEFKDPLLQEPPAWFKS. Residues 69–89 form a helical membrane-spanning segment; sequence FLFCELVFQLPFFPIATYAFL. 2 residues coordinate cholesterol: valine 75 and glutamine 77. Residues 90 to 99 are Cytoplasmic-facing; that stretch reads KGSCKWIRTP. Residues 100–120 traverse the membrane as a helical segment; sequence AIIYSVHTMTTLIPILSTFLF. Positions 108–176 are required for interaction with Hst1/HTN1; it reads MTTLIPILST…YKYEEKRKKK (69 aa). At 121–140 the chain is on the lumenal side; sequence EDFSKASGFKGQRPETLHER. A helical transmembrane segment spans residues 141–161; that stretch reads LTLVSVYAPYLLIPFILLIFM. Topologically, residues 162 to 176 are cytoplasmic; sequence LRSPYYKYEEKRKKK. The ER retention motif motif lies at 172–176; the sequence is KRKKK.

The protein belongs to the TMEM97/sigma-2 receptor family. As to quaternary structure, homodimer. Interacts with NPC1; the interaction impairs NPC1-mediated cholesterol transport. Interacts with PGRMC1 and LDLR; the interaction increases LDL internalization. Interacts with histatin 1/HTN1; the interaction induces HTN1-stimulating wound healing. Interacts with TSPO. Forms a complex with TSPO and PGRMC1; the interaction occurs in MIA PaCa-2 cells but not in MCF7 cells. Widely expressed in normal tissues. Expressed in pancreatic, renal, breast, colon, ovarian surface epithelial (OSE) cells. Highly expressed in various proliferating cancer cells.

It localises to the rough endoplasmic reticulum membrane. It is found in the nucleus membrane. Sigma-2 receptor which contributes to ameliorate dysfunctional cellular processes and slow degenerative progression by regulating cell functions including cholesterol biosynthesis/trafficking, membrane trafficking, autophagy, lipid membrane-bound protein trafficking, and receptor stabilization at the cell surface. Forms a ternary complex with PGRMC1 receptor and low density lipoprotein receptor/LDLR at the plasma membrane, which increases LDLR-mediated LDL cholesterol internalization. Decreases lysosomal sterol transporter NPC1 availability to the cell, probably through NPC1-binding, hence controlling lipid transport, including cholesterol and LBPA, outside of late endosome/lysosome. Binds regio- and stereoselective ligand 20(S)-hydroxycholesterol (20(S)-OHC) which enhances TMEM97-NPC1 interaction and decreases TMEM97-PGRMC1 and TMEM97-TSPO interactions, thereby linking OHC binding to cholesterol homeostasis. Also able to bind cholesterol. Binds histatin 1 (Hst 1)/HN1 salivary peptide at the ER membrane, which is critical for increasing mitochondria-ER contacts and stimulating Hst1 wound healing properties. May alter the activity of some cytochrome P450 proteins. Although shows homologies with sterol isomerases (EXPERA domain), not able to catalyze sterol isomerization. However, may act as sensors of these molecules. Acts as a quality control factor in the ER, promoting the proteolytic degradation of nonproductive and extramitochondrial precursor proteins in the ER membrane thus removing them from the ER surface. The polypeptide is Sigma intracellular receptor 2 (Homo sapiens (Human)).